Consider the following 249-residue polypeptide: ATP synthase subunit a (249 aa).

Helical transmembrane passes span 26-46 (FTNV…FLYL), 84-104 (FFPF…IGLF), 114-134 (IIVT…YGFF), 143-163 (LFVP…IEII), 185-205 (ITLK…ALGI), and 208-228 (TVLP…VAFL).

The protein belongs to the ATPase A chain family. In terms of assembly, F-type ATPases have 2 components, CF(1) - the catalytic core - and CF(0) - the membrane proton channel. CF(1) has five subunits: alpha(3), beta(3), gamma(1), delta(1), epsilon(1). CF(0) has three main subunits: a(1), b(2) and c(9-12). The alpha and beta chains form an alternating ring which encloses part of the gamma chain. CF(1) is attached to CF(0) by a central stalk formed by the gamma and epsilon chains, while a peripheral stalk is formed by the delta and b chains.

Its subcellular location is the cell inner membrane. Its function is as follows. Key component of the proton channel; it plays a direct role in the translocation of protons across the membrane. In Brucella ovis (strain ATCC 25840 / 63/290 / NCTC 10512), this protein is ATP synthase subunit a.